Consider the following 396-residue polypeptide: Elongation factor Tu (396 aa).

One can recognise a tr-type G domain in the interval 10–206; that stretch reads KPHVNVGTIG…ALDTYIPTPE (197 aa). Residues 19-26 form a G1 region; the sequence is GHVDHGKT. 19-26 is a binding site for GTP; sequence GHVDHGKT. Position 26 (threonine 26) interacts with Mg(2+). Residues 60–64 form a G2 region; sequence GITIN. A G3 region spans residues 81-84; it reads DCPG. Residues 81 to 85 and 136 to 139 each bind GTP; these read DCPGH and NKCD. Positions 136 to 139 are G4; that stretch reads NKCD. Positions 174–176 are G5; the sequence is SAK.

This sequence belongs to the TRAFAC class translation factor GTPase superfamily. Classic translation factor GTPase family. EF-Tu/EF-1A subfamily. As to quaternary structure, monomer.

The protein resides in the cytoplasm. It catalyses the reaction GTP + H2O = GDP + phosphate + H(+). Functionally, GTP hydrolase that promotes the GTP-dependent binding of aminoacyl-tRNA to the A-site of ribosomes during protein biosynthesis. In Paraburkholderia xenovorans (strain LB400), this protein is Elongation factor Tu.